Reading from the N-terminus, the 346-residue chain is Dehydrogenase azaJ (346 aa).

43–48 (VDYATQ) provides a ligand contact to NADP(+). 133–140 (LAFSTAIV) is a binding site for substrate. NADP(+) is bound by residues 170–173 (ATSV), 193–196 (SPHN), Tyr-211, and 251–252 (LN). 269–273 (APPNV) lines the substrate pocket. 336-337 (VS) contributes to the NADP(+) binding site.

It belongs to the zinc-containing alcohol dehydrogenase family.

It functions in the pathway secondary metabolite biosynthesis. Functionally, dehydrogenase; part of the gene cluster that mediates the biosynthesis of azaphilones, a class of fungal metabolites characterized by a highly oxygenated pyrano-quinone bicyclic core and exhibiting a broad range of bioactivities. In the first step, the non-reducing polyketide synthase azaA forms the hexaketide precursor from successive condensations of five malonyl-CoA units, presumably with a simple acetyl-CoA starter unit. The reactive polyketide chain then undergoes a PT-mediated C2-C7 cyclization to afford the aromatic ring and is eventually released as an aldehyde through the R-domain. The putative ketoreductase azaE is proposed to catalyze the reduction of the terminal ketone resulting in the early culture product FK17-P2a. The monooxygenase azaH was demonstrated to be the only enzyme required to convert FK17-P2a to azanigerone E. AzaH first hydroxylates the benzaldehyde intermediate FK17-P2a at C4, which triggers the formation of the pyran-ring to afford azanigerone E. In parallel, the 2,4-dimethylhexanoyl chain is synthesized by the HR-PKS azaB and is proposed to be transferred to the C4-hydroxyl of azanigerone E by the acyltransferase azaD directly from the ACP domain of azaB. Alternatively, the 2,4-dimethyl-hexanoyl chain may be offloaded from the HR-PKS as a carboxylic acid and converted to an acyl-CoA by azaF. The resulting acyl-CoA molecule could then be taken up as a substrate by AzaD to form azanigerone B. To yield the carboxylic acid substituent in azanigerone A, the hydroxypropyl side chain of azanigerone B would need to undergo a C-C oxidative cleavage catalyzed by cytochrome P450 AzaI. AzaI is proposed to act on a vicinal diol that leads to a C-C bond scission either through an alkoxyradical intermediate or a peroxy complex. In the biosynthesis of azanigerone A, azanigerone B first undergoes hydroxylation at C10, possibly catalyzed by one of the two FAD-dependent monooxygenases encoded in the cluster, azaG or azaL, resulting in the vicinal diol azanigerone C. Oxidative cleavage of azanigerone C by azaI would yield the corresponding aldehyde derivative of azanigerone A. Finally, the dehydrogenase azaJ is proposed to convert the aldehyde functional group into the carboxylic acid, completing the conversion from azanigerone B to azanigerone A. Alternatively, the oxidation of aldehyde to carboxylic acid may be catalyzed by the same P450 enzyme azaI via consecutive oxidation or by endogenous alcohol dehydrogenase. The sequence is that of Dehydrogenase azaJ from Aspergillus niger (strain ATCC 1015 / CBS 113.46 / FGSC A1144 / LSHB Ac4 / NCTC 3858a / NRRL 328 / USDA 3528.7).